The sequence spans 387 residues: Formate-dependent phosphoribosylglycinamide formyltransferase (387 aa).

Residues 12-13 (EL) and Glu72 each bind N(1)-(5-phospho-beta-D-ribosyl)glycinamide. ATP is bound by residues Arg104, Lys145, 150–155 (SSGKGQ), 185–188 (EEFI), and Glu193. One can recognise an ATP-grasp domain in the interval 109-300 (DLAAKDLKLL…EFELHLRAIL (192 aa)). Residues Glu258 and Glu270 each contribute to the Mg(2+) site. N(1)-(5-phospho-beta-D-ribosyl)glycinamide is bound by residues Asp277, Lys348, and 355–356 (RR).

This sequence belongs to the PurK/PurT family. In terms of assembly, homodimer.

It catalyses the reaction N(1)-(5-phospho-beta-D-ribosyl)glycinamide + formate + ATP = N(2)-formyl-N(1)-(5-phospho-beta-D-ribosyl)glycinamide + ADP + phosphate + H(+). Its pathway is purine metabolism; IMP biosynthesis via de novo pathway; N(2)-formyl-N(1)-(5-phospho-D-ribosyl)glycinamide from N(1)-(5-phospho-D-ribosyl)glycinamide (formate route): step 1/1. In terms of biological role, involved in the de novo purine biosynthesis. Catalyzes the transfer of formate to 5-phospho-ribosyl-glycinamide (GAR), producing 5-phospho-ribosyl-N-formylglycinamide (FGAR). Formate is provided by PurU via hydrolysis of 10-formyl-tetrahydrofolate. This Leptospira interrogans serogroup Icterohaemorrhagiae serovar copenhageni (strain Fiocruz L1-130) protein is Formate-dependent phosphoribosylglycinamide formyltransferase.